A 339-amino-acid chain; its full sequence is Serpentine receptor class gamma-7 (339 aa).

7 helical membrane-spanning segments follow: residues 30-50 (YWIQCLWLIPTLFLLVWIIIT), 65-85 (WILTADCVVSIILILLDLFVV), 98-118 (FSTIFINYPIISDIYFPIYNY), 152-172 (IPLFLTIICILPILVVWNTVI), 200-220 (LHLTFIFVSISFILISSLLLM), 239-259 (SIFIIVAFFFQAAFQSFYAFF), and 268-288 (FLVDFQFIIYDVMTVGYPLIF). The tract at residues 319-339 (PFNNTMPRQESPSPNYDSILA) is disordered.

It belongs to the nematode receptor-like protein srg family.

It localises to the membrane. This chain is Serpentine receptor class gamma-7 (srg-7), found in Caenorhabditis elegans.